The chain runs to 85 residues: Putative transmembrane protein ORF28 (85 aa).

The next 2 membrane-spanning stretches (helical) occupy residues 32-52 (IMLLWWIGILGMLNYNLVQIV) and 59-79 (LLSVSTFIVGCGLCIGFMLGI).

The protein localises to the host membrane. This is Putative transmembrane protein ORF28 from Haloarcula hispanica (His1V).